The chain runs to 501 residues: L-arabinose isomerase (501 aa).

Mn(2+)-binding residues include Glu307, Glu334, His351, and His450.

The protein belongs to the arabinose isomerase family. Requires Mn(2+) as cofactor.

It catalyses the reaction beta-L-arabinopyranose = L-ribulose. It participates in carbohydrate degradation; L-arabinose degradation via L-ribulose; D-xylulose 5-phosphate from L-arabinose (bacterial route): step 1/3. Its function is as follows. Catalyzes the conversion of L-arabinose to L-ribulose. The sequence is that of L-arabinose isomerase from Acidothermus cellulolyticus (strain ATCC 43068 / DSM 8971 / 11B).